Reading from the N-terminus, the 213-residue chain is Large ribosomal subunit protein uL1 (213 aa).

Belongs to the universal ribosomal protein uL1 family. As to quaternary structure, part of the 50S ribosomal subunit.

Its function is as follows. Binds directly to 23S rRNA. Probably involved in E site tRNA release. Protein L1 is also a translational repressor protein, it controls the translation of its operon by binding to its mRNA. In Methanosarcina mazei (strain ATCC BAA-159 / DSM 3647 / Goe1 / Go1 / JCM 11833 / OCM 88) (Methanosarcina frisia), this protein is Large ribosomal subunit protein uL1.